The sequence spans 1409 residues: Adhesion and penetration protein autotransporter (1409 aa).

The N-terminal stretch at 1 to 25 is a signal peptide; it reads MKKTVFRLNFLTACVSLGIASQAWA. One can recognise a Peptidase S6 domain in the interval 26–294; sequence GHTYFGIDYQ…LIREEWFYNE (269 aa). Ser-250 is a catalytic residue. 2 disordered regions span residues 866 to 888 and 1016 to 1078; these read YSAS…TPTS and AKQV…SKRA. Residues 1057-1067 show a composition bias toward polar residues; sequence VEQTTETQTSK. The segment covering 1068–1077 has biased composition (basic residues); sequence PKTKKGRSKR. The region spanning 1156–1409 is the Autotransporter domain; the sequence is VDQAQSALWT…NVGVKLGYRW (254 aa).

The protein localises to the periplasm. Its subcellular location is the secreted. It is found in the cell surface. It localises to the cell outer membrane. Its function is as follows. Probable protease; promotes adherence and invasion by directly binding to a host cell structure. This chain is Adhesion and penetration protein autotransporter (hap), found in Haemophilus influenzae (strain ATCC 51907 / DSM 11121 / KW20 / Rd).